The chain runs to 120 residues: NAD(P)H-quinone oxidoreductase subunit 3, chloroplastic (120 aa).

Transmembrane regions (helical) follow at residues 9 to 29 (IFWAFLLISSVIPILAFLLSG), 64 to 84 (MFALVFVVFDVETVFLYPWAM), and 88 to 108 (VLGVSVFIEALIFVLILIVGL).

The protein belongs to the complex I subunit 3 family. NDH is composed of at least 16 different subunits, 5 of which are encoded in the nucleus.

The protein localises to the plastid. It localises to the chloroplast thylakoid membrane. The catalysed reaction is a plastoquinone + NADH + (n+1) H(+)(in) = a plastoquinol + NAD(+) + n H(+)(out). The enzyme catalyses a plastoquinone + NADPH + (n+1) H(+)(in) = a plastoquinol + NADP(+) + n H(+)(out). Its function is as follows. NDH shuttles electrons from NAD(P)H:plastoquinone, via FMN and iron-sulfur (Fe-S) centers, to quinones in the photosynthetic chain and possibly in a chloroplast respiratory chain. The immediate electron acceptor for the enzyme in this species is believed to be plastoquinone. Couples the redox reaction to proton translocation, and thus conserves the redox energy in a proton gradient. This Fagopyrum esculentum subsp. ancestrale (Wild buckwheat) protein is NAD(P)H-quinone oxidoreductase subunit 3, chloroplastic.